A 243-amino-acid polypeptide reads, in one-letter code: ABC transporter arginine-binding protein 1 (243 aa).

Residues 1 to 19 (MKKLVLAALLASFTFGASA) form the signal peptide.

Belongs to the bacterial solute-binding protein 3 family. As to quaternary structure, the complex is composed of two ATP-binding proteins (ArtP), two transmembrane proteins (ArtM and ArtQ) and two solute-binding proteins (ArtJ and ArtI).

The protein resides in the periplasm. Functionally, part of the ABC transporter complex ArtPIQMJ involved in arginine transport. Binds L-arginine with high affinity. In Escherichia coli (strain K12), this protein is ABC transporter arginine-binding protein 1 (artJ).